Here is a 322-residue protein sequence, read N- to C-terminus: Heat-inducible transcription repressor HrcA (322 aa).

Belongs to the HrcA family.

Its function is as follows. Negative regulator of class I heat shock genes (grpE-dnaK-dnaJ and groELS operons). Prevents heat-shock induction of these operons. The chain is Heat-inducible transcription repressor HrcA from Staphylococcus carnosus (strain TM300).